The sequence spans 315 residues: Methionyl-tRNA formyltransferase (315 aa).

Position 113–116 (113–116) interacts with (6S)-5,6,7,8-tetrahydrofolate; it reads SLLP.

The protein belongs to the Fmt family.

It catalyses the reaction L-methionyl-tRNA(fMet) + (6R)-10-formyltetrahydrofolate = N-formyl-L-methionyl-tRNA(fMet) + (6S)-5,6,7,8-tetrahydrofolate + H(+). Its function is as follows. Attaches a formyl group to the free amino group of methionyl-tRNA(fMet). The formyl group appears to play a dual role in the initiator identity of N-formylmethionyl-tRNA by promoting its recognition by IF2 and preventing the misappropriation of this tRNA by the elongation apparatus. This is Methionyl-tRNA formyltransferase from Escherichia coli O139:H28 (strain E24377A / ETEC).